We begin with the raw amino-acid sequence, 238 residues long: Large ribosomal subunit protein uL1 (238 aa).

It belongs to the universal ribosomal protein uL1 family. Part of the 50S ribosomal subunit.

Functionally, binds directly to 23S rRNA. The L1 stalk is quite mobile in the ribosome, and is involved in E site tRNA release. Protein L1 is also a translational repressor protein, it controls the translation of the L11 operon by binding to its mRNA. The sequence is that of Large ribosomal subunit protein uL1 from Frankia casuarinae (strain DSM 45818 / CECT 9043 / HFP020203 / CcI3).